Reading from the N-terminus, the 88-residue chain is Large ribosomal subunit protein bL27 (88 aa).

Residues 1-25 are disordered; that stretch reads MAHKKGASSSSNGRDSEAKRLGVKR.

The protein belongs to the bacterial ribosomal protein bL27 family.

In Corynebacterium diphtheriae (strain ATCC 700971 / NCTC 13129 / Biotype gravis), this protein is Large ribosomal subunit protein bL27.